A 381-amino-acid polypeptide reads, in one-letter code: MTHASNTHPVTELTKELIARPSVTPLDEGCQTLMAERLAAIGFNIEPMVFEDTTNMWARRGNEGPVFCFAGHTDVVPAGDLSRWHTPPFEPTIIDGYLYGRGAADMKGSLAAMIVATERFVAKHPNHPGSIAFLITSDEEGPFINGTTRVIDTLEARNEKITWTLVGEPSSTLKLGDVVKNGRRGSLTANLTVKGIQGHVAYPHLADNPIHKAAPFLAELSQTHWDNGNEFFPPTSMQIANINGGTGASNVIPGTLEVMFNFRYSTEVTAEILIERVEALLTAHELDYDISWTFNGLPFLTGEGPLLDATRHAIRQITGYDTDPQTTGGTSDGRFIAPTGAKVLELGPVNATIHKVNECVKIDDLEQLALCYEVILEQLLC.

Zn(2+) is bound at residue His72. The active site involves Asp74. Asp105 contributes to the Zn(2+) binding site. Catalysis depends on Glu139, which acts as the Proton acceptor. The Zn(2+) site is built by Glu140, Glu168, and His354.

Belongs to the peptidase M20A family. DapE subfamily. In terms of assembly, homodimer. Requires Zn(2+) as cofactor. Co(2+) serves as cofactor.

It carries out the reaction N-succinyl-(2S,6S)-2,6-diaminopimelate + H2O = (2S,6S)-2,6-diaminopimelate + succinate. The protein operates within amino-acid biosynthesis; L-lysine biosynthesis via DAP pathway; LL-2,6-diaminopimelate from (S)-tetrahydrodipicolinate (succinylase route): step 3/3. Catalyzes the hydrolysis of N-succinyl-L,L-diaminopimelic acid (SDAP), forming succinate and LL-2,6-diaminopimelate (DAP), an intermediate involved in the bacterial biosynthesis of lysine and meso-diaminopimelic acid, an essential component of bacterial cell walls. This is Succinyl-diaminopimelate desuccinylase from Shewanella sp. (strain ANA-3).